We begin with the raw amino-acid sequence, 184 residues long: MYKKFFDGVIEVITGPMFSGKSDELIKRIKILTYADIKTLVIKPSVDYRFSQCEIVSRSGLKIPTFLARTTQEIRDLFTRDNYQAIAIDEIQFFDEEIVTFLEQIADKGIRVIVSGLDQDFRRKPFGSLPNLMAIAENVTKLQAVCSLCKRAATTTARKVLNEAQTLIGDQDEYEARCRACHSL.

ATP-binding positions include 15–22 (GPMFSGKS) and 89–92 (DEIQ). E90 (proton acceptor) is an active-site residue. Positions 146, 149, 178, and 181 each coordinate Zn(2+).

This sequence belongs to the thymidine kinase family. As to quaternary structure, homotetramer.

The protein resides in the cytoplasm. The enzyme catalyses thymidine + ATP = dTMP + ADP + H(+). In Mesomycoplasma hyopneumoniae (strain 232) (Mycoplasma hyopneumoniae), this protein is Thymidine kinase.